Here is a 287-residue protein sequence, read N- to C-terminus: 4-hydroxybenzoate octaprenyltransferase (287 aa).

8 helical membrane passes run 21–39 (PIGTLLLLWPTLWALWLAA), 95–115 (VLALFAVLALISFALVLTMNP), 116–136 (LTIGLSFAALLLAVCYPFMKR), 138–158 (IPIPQLVLGMAFSWSIPMAYA), 161–181 (ANALPAVAWLVFLANLLWTIA), 213–233 (IIGALQLLTLLILLLVGQLSE), 234–251 (LGSSYYWSLLAAAALFVY), and 264–284 (CFQAFLNNNYVGALIFAGVVI).

It belongs to the UbiA prenyltransferase family. Mg(2+) serves as cofactor.

Its subcellular location is the cell inner membrane. It catalyses the reaction all-trans-octaprenyl diphosphate + 4-hydroxybenzoate = 4-hydroxy-3-(all-trans-octaprenyl)benzoate + diphosphate. Its pathway is cofactor biosynthesis; ubiquinone biosynthesis. In terms of biological role, catalyzes the prenylation of para-hydroxybenzoate (PHB) with an all-trans polyprenyl group. Mediates the second step in the final reaction sequence of ubiquinone-8 (UQ-8) biosynthesis, which is the condensation of the polyisoprenoid side chain with PHB, generating the first membrane-bound Q intermediate 3-octaprenyl-4-hydroxybenzoate. The protein is 4-hydroxybenzoate octaprenyltransferase of Aeromonas hydrophila subsp. hydrophila (strain ATCC 7966 / DSM 30187 / BCRC 13018 / CCUG 14551 / JCM 1027 / KCTC 2358 / NCIMB 9240 / NCTC 8049).